The sequence spans 186 residues: LSM12 homolog B (186 aa).

In terms of domain architecture, Sm spans 1–74 (MSSLAPCFTV…CMDIEIVKEA (74 aa)). The AD domain maps to 84-186 (EPIDLPMIRE…VVQNFCSKQF (103 aa)).

Belongs to the LSM12 family. In terms of assembly, interacts with Sbat; along with Sbat and Vlet, may form an accessory subcomplex involved in SMN complex function.

Functionally, may have an accessory function in the survival motor neuron (SMN) complex. This Drosophila melanogaster (Fruit fly) protein is LSM12 homolog B.